The following is a 164-amino-acid chain: MTEFTHINQQGHAKMVDVSDKQITKRTAVAHSSITVNKTIFKQISNNTNTKGNVLNTAQIAGIMAAKNTSTIIPMCHPLPLTGIDVHFSWDETNAPLYTLNIQTTVSTTGKTGVEMEALTAASATALTIYDMTKAVDKGMIIGETYLESKSGGKSGDFQRQSNQ.

Residues 75 to 77 and 116 to 117 contribute to the substrate site; these read MCH and ME. Residue D131 is part of the active site.

The protein belongs to the MoaC family. Homohexamer; trimer of dimers.

It carries out the reaction (8S)-3',8-cyclo-7,8-dihydroguanosine 5'-triphosphate = cyclic pyranopterin phosphate + diphosphate. The protein operates within cofactor biosynthesis; molybdopterin biosynthesis. Functionally, catalyzes the conversion of (8S)-3',8-cyclo-7,8-dihydroguanosine 5'-triphosphate to cyclic pyranopterin monophosphate (cPMP). This Staphylococcus aureus (strain MSSA476) protein is Cyclic pyranopterin monophosphate synthase.